Consider the following 110-residue polypeptide: Large ribosomal subunit protein uL22 (110 aa).

This sequence belongs to the universal ribosomal protein uL22 family. Part of the 50S ribosomal subunit.

Its function is as follows. This protein binds specifically to 23S rRNA; its binding is stimulated by other ribosomal proteins, e.g. L4, L17, and L20. It is important during the early stages of 50S assembly. It makes multiple contacts with different domains of the 23S rRNA in the assembled 50S subunit and ribosome. Functionally, the globular domain of the protein is located near the polypeptide exit tunnel on the outside of the subunit, while an extended beta-hairpin is found that lines the wall of the exit tunnel in the center of the 70S ribosome. In Pseudomonas aeruginosa (strain LESB58), this protein is Large ribosomal subunit protein uL22.